Here is a 181-residue protein sequence, read N- to C-terminus: Peptidyl-tRNA hydrolase (181 aa).

Tyr-14 provides a ligand contact to tRNA. Catalysis depends on His-19, which acts as the Proton acceptor. TRNA contacts are provided by Tyr-62, Asn-64, and Asn-108.

This sequence belongs to the PTH family. As to quaternary structure, monomer.

The protein localises to the cytoplasm. The catalysed reaction is an N-acyl-L-alpha-aminoacyl-tRNA + H2O = an N-acyl-L-amino acid + a tRNA + H(+). Its function is as follows. Hydrolyzes ribosome-free peptidyl-tRNAs (with 1 or more amino acids incorporated), which drop off the ribosome during protein synthesis, or as a result of ribosome stalling. In terms of biological role, catalyzes the release of premature peptidyl moieties from peptidyl-tRNA molecules trapped in stalled 50S ribosomal subunits, and thus maintains levels of free tRNAs and 50S ribosomes. The protein is Peptidyl-tRNA hydrolase of Campylobacter jejuni subsp. jejuni serotype O:2 (strain ATCC 700819 / NCTC 11168).